A 669-amino-acid polypeptide reads, in one-letter code: uncharacterized protein (669 aa).

The next 6 membrane-spanning stretches (helical) occupy residues 39-61 (LCPL…GTSW), 124-146 (ISLW…LISI), 153-175 (GIIY…YALG), 190-212 (GLAF…FFGV), 221-243 (FAPG…QTAL), and 263-285 (IAAG…IRYL). 2 consecutive RCK C-terminal domains span residues 316–397 (AGSL…KLIG) and 398–483 (KESD…LGGR). Transmembrane regions (helical) follow at residues 484-506 (PILN…GYIF), 516-538 (IPFA…YWRS), 558-580 (IGLN…ESFH), 585-607 (IWVA…VVGI), and 645-667 (VPYP…FAML).

The protein belongs to the AAE transporter (TC 2.A.81) family.

It is found in the cell membrane. This is an uncharacterized protein from Desulfotalea psychrophila (strain LSv54 / DSM 12343).